The sequence spans 368 residues: Ribosomal RNA large subunit methyltransferase M (368 aa).

S-adenosyl-L-methionine-binding positions include Ser-192, 225–228 (APGG), Asp-244, Asp-264, and Asp-281. The active-site Proton acceptor is the Lys-310.

Belongs to the class I-like SAM-binding methyltransferase superfamily. RNA methyltransferase RlmE family. RlmM subfamily. Monomer.

It localises to the cytoplasm. It catalyses the reaction cytidine(2498) in 23S rRNA + S-adenosyl-L-methionine = 2'-O-methylcytidine(2498) in 23S rRNA + S-adenosyl-L-homocysteine + H(+). Its function is as follows. Catalyzes the 2'-O-methylation at nucleotide C2498 in 23S rRNA. The chain is Ribosomal RNA large subunit methyltransferase M from Colwellia psychrerythraea (strain 34H / ATCC BAA-681) (Vibrio psychroerythus).